We begin with the raw amino-acid sequence, 378 residues long: Lipid-A-disaccharide synthase (378 aa).

It belongs to the LpxB family.

It catalyses the reaction a lipid X + a UDP-2-N,3-O-bis[(3R)-3-hydroxyacyl]-alpha-D-glucosamine = a lipid A disaccharide + UDP + H(+). It participates in bacterial outer membrane biogenesis; LPS lipid A biosynthesis. Functionally, condensation of UDP-2,3-diacylglucosamine and 2,3-diacylglucosamine-1-phosphate to form lipid A disaccharide, a precursor of lipid A, a phosphorylated glycolipid that anchors the lipopolysaccharide to the outer membrane of the cell. The polypeptide is Lipid-A-disaccharide synthase (Pseudomonas paraeruginosa (strain DSM 24068 / PA7) (Pseudomonas aeruginosa (strain PA7))).